The following is a 586-amino-acid chain: Kinesin-like protein KIF25 (586 aa).

Residues 10 to 94 (SFWEQRTRQL…VIQKLNQDIQ (85 aa)) adopt a coiled-coil conformation. Residues 173–565 (NIRVHCRIRP…LGFGIRARQV (393 aa)) form the Kinesin motor domain. 267–274 (GQTGSGKS) is an ATP binding site. Disordered regions lie at residues 417-460 (TADQ…AGRA) and 564-586 (QVQR…RRPD).

It belongs to the TRAFAC class myosin-kinesin ATPase superfamily. Kinesin family. In terms of assembly, homotetramer.

It is found in the cytoplasm. The protein resides in the cytoskeleton. The protein localises to the microtubule organizing center. Its subcellular location is the centrosome. Its function is as follows. Minus-end microtubule-dependent motor protein. Acts as a negative regulator of centrosome separation required to prevent premature centrosome separation during interphase. Required to maintain a centered nucleus to ensure that the spindle is stably oriented at the onset of mitosis. May also act as a negative regulator of amino acid starvation-induced autophagy. This Macaca fascicularis (Crab-eating macaque) protein is Kinesin-like protein KIF25.